Reading from the N-terminus, the 233-residue chain is Phosphoribosylformylglycinamidine synthase subunit PurQ (233 aa).

Residues 3–233 (SAVLVFPGIN…GLAQHLAKAA (231 aa)) form the Glutamine amidotransferase type-1 domain. The active-site Nucleophile is the cysteine 87. Residues histidine 204 and glutamate 206 contribute to the active site.

As to quaternary structure, part of the FGAM synthase complex composed of 1 PurL, 1 PurQ and 2 PurS subunits.

The protein resides in the cytoplasm. The enzyme catalyses N(2)-formyl-N(1)-(5-phospho-beta-D-ribosyl)glycinamide + L-glutamine + ATP + H2O = 2-formamido-N(1)-(5-O-phospho-beta-D-ribosyl)acetamidine + L-glutamate + ADP + phosphate + H(+). It catalyses the reaction L-glutamine + H2O = L-glutamate + NH4(+). Its pathway is purine metabolism; IMP biosynthesis via de novo pathway; 5-amino-1-(5-phospho-D-ribosyl)imidazole from N(2)-formyl-N(1)-(5-phospho-D-ribosyl)glycinamide: step 1/2. Its function is as follows. Part of the phosphoribosylformylglycinamidine synthase complex involved in the purines biosynthetic pathway. Catalyzes the ATP-dependent conversion of formylglycinamide ribonucleotide (FGAR) and glutamine to yield formylglycinamidine ribonucleotide (FGAM) and glutamate. The FGAM synthase complex is composed of three subunits. PurQ produces an ammonia molecule by converting glutamine to glutamate. PurL transfers the ammonia molecule to FGAR to form FGAM in an ATP-dependent manner. PurS interacts with PurQ and PurL and is thought to assist in the transfer of the ammonia molecule from PurQ to PurL. The chain is Phosphoribosylformylglycinamidine synthase subunit PurQ from Rhodopseudomonas palustris (strain ATCC BAA-98 / CGA009).